Reading from the N-terminus, the 403-residue chain is 26S proteasome regulatory subunit 6B homolog (403 aa).

Met1 bears the N-acetylmethionine mark. 191–198 (GPPGTGKT) is an ATP binding site.

Belongs to the AAA ATPase family.

It localises to the cytoplasm. The protein resides in the nucleus. Functionally, the 26S proteasome is involved in the ATP-dependent degradation of ubiquitinated proteins. The regulatory (or ATPase) complex confers ATP dependency and substrate specificity to the 26S complex. The protein is 26S proteasome regulatory subunit 6B homolog (psmC4) of Dictyostelium discoideum (Social amoeba).